Here is a 424-residue protein sequence, read N- to C-terminus: Serine--tRNA ligase (424 aa).

233–235 (TAE) serves as a coordination point for L-serine. An ATP-binding site is contributed by 264 to 266 (RRE). Position 287 (glutamate 287) interacts with L-serine. Residue 351–354 (EISS) coordinates ATP. Residue serine 386 participates in L-serine binding.

It belongs to the class-II aminoacyl-tRNA synthetase family. Type-1 seryl-tRNA synthetase subfamily. Homodimer. The tRNA molecule binds across the dimer.

It is found in the cytoplasm. The catalysed reaction is tRNA(Ser) + L-serine + ATP = L-seryl-tRNA(Ser) + AMP + diphosphate + H(+). It carries out the reaction tRNA(Sec) + L-serine + ATP = L-seryl-tRNA(Sec) + AMP + diphosphate + H(+). The protein operates within aminoacyl-tRNA biosynthesis; selenocysteinyl-tRNA(Sec) biosynthesis; L-seryl-tRNA(Sec) from L-serine and tRNA(Sec): step 1/1. Catalyzes the attachment of serine to tRNA(Ser). Is also able to aminoacylate tRNA(Sec) with serine, to form the misacylated tRNA L-seryl-tRNA(Sec), which will be further converted into selenocysteinyl-tRNA(Sec). This Petrotoga mobilis (strain DSM 10674 / SJ95) protein is Serine--tRNA ligase.